Consider the following 123-residue polypeptide: uncharacterized protein (123 aa).

The next 4 helical transmembrane spans lie at 9–31, 38–56, 67–91, and 98–114; these read LLLRFTLEIAALISLGVYAWISF, VLTLVLPIAVMIVWSVFAV, VIAVNGVTRLVIELLIFAMAVAALY, and VSIVFLCLIILHYIISA.

The protein to E.coli YhgE.

It localises to the cell membrane. This is an uncharacterized protein from Bacillus subtilis (strain 168).